The primary structure comprises 290 residues: ATP synthase gamma chain (290 aa).

Belongs to the ATPase gamma chain family. F-type ATPases have 2 components, CF(1) - the catalytic core - and CF(0) - the membrane proton channel. CF(1) has five subunits: alpha(3), beta(3), gamma(1), delta(1), epsilon(1). CF(0) has three main subunits: a, b and c.

The protein resides in the cell membrane. Its function is as follows. Produces ATP from ADP in the presence of a proton gradient across the membrane. The gamma chain is believed to be important in regulating ATPase activity and the flow of protons through the CF(0) complex. This Wolbachia sp. subsp. Brugia malayi (strain TRS) protein is ATP synthase gamma chain.